A 540-amino-acid chain; its full sequence is 2-isopropylmalate synthase (540 aa).

Positions 8-269 (VLIFDTTLRD…YFNPFFGREP (262 aa)) constitute a Pyruvate carboxyltransferase domain. Mn(2+)-binding residues include Asp17, His208, His210, and Asn244. The regulatory domain stretch occupies residues 408-540 (QLRLVQVSCG…AVLADLRSGI (133 aa)).

The protein belongs to the alpha-IPM synthase/homocitrate synthase family. LeuA type 1 subfamily. In terms of assembly, homodimer. Mn(2+) is required as a cofactor.

Its subcellular location is the cytoplasm. It catalyses the reaction 3-methyl-2-oxobutanoate + acetyl-CoA + H2O = (2S)-2-isopropylmalate + CoA + H(+). It functions in the pathway amino-acid biosynthesis; L-leucine biosynthesis; L-leucine from 3-methyl-2-oxobutanoate: step 1/4. Catalyzes the condensation of the acetyl group of acetyl-CoA with 3-methyl-2-oxobutanoate (2-ketoisovalerate) to form 3-carboxy-3-hydroxy-4-methylpentanoate (2-isopropylmalate). The chain is 2-isopropylmalate synthase from Prochlorococcus marinus (strain MIT 9313).